Here is a 654-residue protein sequence, read N- to C-terminus: tRNA 5-methylaminomethyl-2-thiouridine biosynthesis bifunctional protein MnmC (654 aa).

Residues 1–236 are tRNA (mnm(5)s(2)U34)-methyltransferase; it reads MSTLLQHAQI…KWEVMHGVYT (236 aa). An FAD-dependent cmnm(5)s(2)U34 oxidoreductase region spans residues 262–654; sequence IGAGLAGSAT…FALRRLIRGK (393 aa).

In the N-terminal section; belongs to the methyltransferase superfamily. tRNA (mnm(5)s(2)U34)-methyltransferase family. The protein in the C-terminal section; belongs to the DAO family. FAD serves as cofactor.

Its subcellular location is the cytoplasm. It catalyses the reaction 5-aminomethyl-2-thiouridine(34) in tRNA + S-adenosyl-L-methionine = 5-methylaminomethyl-2-thiouridine(34) in tRNA + S-adenosyl-L-homocysteine + H(+). In terms of biological role, catalyzes the last two steps in the biosynthesis of 5-methylaminomethyl-2-thiouridine (mnm(5)s(2)U) at the wobble position (U34) in tRNA. Catalyzes the FAD-dependent demodification of cmnm(5)s(2)U34 to nm(5)s(2)U34, followed by the transfer of a methyl group from S-adenosyl-L-methionine to nm(5)s(2)U34, to form mnm(5)s(2)U34. This Pseudomonas entomophila (strain L48) protein is tRNA 5-methylaminomethyl-2-thiouridine biosynthesis bifunctional protein MnmC.